The chain runs to 498 residues: Putative F-box/FBD/LRR-repeat protein At4g03220 (498 aa).

The F-box domain maps to 23–71 (VDRISNLPDSLNHQILLLLPLKSAAQASLLSKRWRSLFLSLPDLDFTSI). LRR repeat units follow at residues 148-172 (SQNL…SSAR), 175-200 (FQKL…FFTD), and 235-259 (SLQL…CFYS). Positions 416 to 466 (YWESQAYELESFLNHLEFVEIHGFVECENEMSLAIFLLRHGKALIKMTLRS) constitute an FBD domain.

The protein is Putative F-box/FBD/LRR-repeat protein At4g03220 of Arabidopsis thaliana (Mouse-ear cress).